Reading from the N-terminus, the 880-residue chain is Alanine--tRNA ligase (880 aa).

This sequence belongs to the class-II aminoacyl-tRNA synthetase family.

It localises to the cytoplasm. The catalysed reaction is tRNA(Ala) + L-alanine + ATP = L-alanyl-tRNA(Ala) + AMP + diphosphate. Catalyzes the attachment of alanine to tRNA(Ala) in a two-step reaction: alanine is first activated by ATP to form Ala-AMP and then transferred to the acceptor end of tRNA(Ala). Also edits incorrectly charged Ser-tRNA(Ala) and Gly-tRNA(Ala) via its editing domain. This Lactiplantibacillus plantarum (strain ATCC BAA-793 / NCIMB 8826 / WCFS1) (Lactobacillus plantarum) protein is Alanine--tRNA ligase (alaS).